Here is a 91-residue protein sequence, read N- to C-terminus: Small ribosomal subunit protein bS16c (91 aa).

This sequence belongs to the bacterial ribosomal protein bS16 family.

It is found in the plastid. It localises to the chloroplast. The sequence is that of Small ribosomal subunit protein bS16c from Vitis vinifera (Grape).